The primary structure comprises 212 residues: uncharacterized protein (212 aa).

A run of 4 helical transmembrane segments spans residues 34–54, 59–79, 126–146, and 171–191; these read IFGIVLVILSLPSALPIPAPG, FGVLIFLVAIQLMAGRQELWL, ILMGITVGSMAISMMIPIPGT, and AGMIFSVLIGVLMVSVIYVFF.

The protein to R.meliloti ExoD.

It is found in the cell membrane. This is an uncharacterized protein from Synechocystis sp. (strain ATCC 27184 / PCC 6803 / Kazusa).